The primary structure comprises 277 residues: Phosphate import ATP-binding protein PstB (277 aa).

In terms of domain architecture, ABC transporter spans 31–272; sequence IEVPGLSLYY…PAKKQTEDYI (242 aa). 63–70 contributes to the ATP binding site; it reads GPSGCGKS.

The protein belongs to the ABC transporter superfamily. Phosphate importer (TC 3.A.1.7) family. In terms of assembly, the complex is composed of two ATP-binding proteins (PstB), two transmembrane proteins (PstC and PstA) and a solute-binding protein (PstS).

The protein resides in the cell inner membrane. It carries out the reaction phosphate(out) + ATP + H2O = ADP + 2 phosphate(in) + H(+). Part of the ABC transporter complex PstSACB involved in phosphate import. Responsible for energy coupling to the transport system. This chain is Phosphate import ATP-binding protein PstB, found in Pseudomonas fluorescens (strain ATCC BAA-477 / NRRL B-23932 / Pf-5).